A 207-amino-acid polypeptide reads, in one-letter code: Small ribosomal subunit protein uS4c (207 aa).

The S4 RNA-binding domain occupies 92 to 156 (MRLDNILFRL…YQSIITKRIE (65 aa)).

The protein belongs to the universal ribosomal protein uS4 family. In terms of assembly, part of the 30S ribosomal subunit. Contacts protein S5. The interaction surface between S4 and S5 is involved in control of translational fidelity.

It localises to the plastid. It is found in the chloroplast. Functionally, one of the primary rRNA binding proteins, it binds directly to 16S rRNA where it nucleates assembly of the body of the 30S subunit. In terms of biological role, with S5 and S12 plays an important role in translational accuracy. The sequence is that of Small ribosomal subunit protein uS4c (rps4) from Equisetum pratense (Meadow horsetail).